The chain runs to 489 residues: Netrin-5 (489 aa).

Residues 1-16 (MPVTFALLLLLGQATA) form the signal peptide. Residue N62 is glycosylated (N-linked (GlcNAc...) asparagine). 15 disulfide bridges follow: C157-C166, C159-C175, C177-C186, C189-C209, C212-C221, C214-C239, C242-C251, C254-C272, C275-C287, C277-C294, C296-C305, C308-C322, C345-C418, C349-C420, and C364-C475. Laminin EGF-like domains lie at 157–211 (CQCH…PCLP), 212–274 (CSCN…ACRA), and 275–324 (CQCH…PCQR). The 131-residue stretch at 345-475 (CQNYCNMSDT…LQQEERAGGC (131 aa)) folds into the NTR domain. Positions 470–489 (ERAGGCRGVRAPTPSPRPEH) are disordered.

The protein localises to the secreted. Its function is as follows. Plays a role in neurogenesis. Prevents motor neuron cell body migration out of the neural tube. In Homo sapiens (Human), this protein is Netrin-5 (NTN5).